The following is a 235-amino-acid chain: Small ribosomal subunit protein uS3 (235 aa).

A KH type-2 domain is found at 39-107 (IREFIKEECK…ELHLNIVEVR (69 aa)). Positions 213 to 235 (QARDRKAQELQDGPAPRGAGGRR) are disordered.

The protein belongs to the universal ribosomal protein uS3 family. Part of the 30S ribosomal subunit. Forms a tight complex with proteins S10 and S14.

Its function is as follows. Binds the lower part of the 30S subunit head. Binds mRNA in the 70S ribosome, positioning it for translation. This is Small ribosomal subunit protein uS3 from Ruegeria pomeroyi (strain ATCC 700808 / DSM 15171 / DSS-3) (Silicibacter pomeroyi).